Consider the following 371-residue polypeptide: Glycosyltransferase 8 domain-containing protein 1 (371 aa).

The Cytoplasmic portion of the chain corresponds to 1–7 (MSFRKVN). Residues 8–28 (IVILVLAVALFLLVLHHNFLG) traverse the membrane as a helical; Signal-anchor for type II membrane protein segment. Residues 29-371 (LSSLLRNEVS…RRHVEISNTK (343 aa)) are Lumenal-facing. N-linked (GlcNAc...) asparagine glycosylation is found at asparagine 103 and asparagine 257.

It belongs to the glycosyltransferase 8 family.

The protein resides in the membrane. This Bos taurus (Bovine) protein is Glycosyltransferase 8 domain-containing protein 1 (GLT8D1).